The primary structure comprises 433 residues: UPF0761 membrane protein Sde_0901 (433 aa).

6 consecutive transmembrane segments (helical) span residues 46 to 66 (LFAMVPLMAVFYSMFSMFPAF), 103 to 123 (LSAAGAGLLVVTAYLMLTNIE), 142 to 162 (FLLYWAVLTIGPLLLGAGLAM), 185 to 205 (FFSYLPLFTTSAAFTLLFAAV), 217 to 237 (IGGILTAVCFELLKIGFGWVV), and 247 to 267 (GAFAVVPLFLLWVNLLWMIIL).

The protein belongs to the UPF0761 family.

It is found in the cell inner membrane. The sequence is that of UPF0761 membrane protein Sde_0901 from Saccharophagus degradans (strain 2-40 / ATCC 43961 / DSM 17024).